We begin with the raw amino-acid sequence, 419 residues long: Histone acetyltransferase type B subunit 2 (419 aa).

WD repeat units lie at residues 131–171, 177–217, 225–265, 267–307, and 311–351; these read PHDG…VEAL, YHTE…KNIK, AHTD…IIHN, NTKK…NPLY, and GHED…AEQT. The interaction with the histone H4 N-terminus stretch occupies residues 353–357; the sequence is DEIED. The WD 6 repeat unit spans residues 368–408; the sequence is GHKTSINDIAVNPNINWLVASAEEDNIVQIWKCSSNIPRIG.

This sequence belongs to the WD repeat RBAP46/RBAP48/MSI1 family. In terms of assembly, component of the HAT-B complex composed of at least HAT1 and HAT2. The HAT-B complex binds to histone H4 tail.

The protein localises to the cytoplasm. The protein resides in the nucleus. In terms of biological role, regulatory subunit of the histone acetylase B (HAT-B) complex. The complex acetylates Lys-12 of histone H4 which is required for telomeric silencing. The sequence is that of Histone acetyltransferase type B subunit 2 (HAT2) from Candida glabrata (strain ATCC 2001 / BCRC 20586 / JCM 3761 / NBRC 0622 / NRRL Y-65 / CBS 138) (Yeast).